Here is a 290-residue protein sequence, read N- to C-terminus: Bifunctional protein FolD 1 (290 aa).

Residues 164-166 (GRS), I193, and I236 contribute to the NADP(+) site.

It belongs to the tetrahydrofolate dehydrogenase/cyclohydrolase family. As to quaternary structure, homodimer.

The enzyme catalyses (6R)-5,10-methylene-5,6,7,8-tetrahydrofolate + NADP(+) = (6R)-5,10-methenyltetrahydrofolate + NADPH. It carries out the reaction (6R)-5,10-methenyltetrahydrofolate + H2O = (6R)-10-formyltetrahydrofolate + H(+). It participates in one-carbon metabolism; tetrahydrofolate interconversion. Its function is as follows. Catalyzes the oxidation of 5,10-methylenetetrahydrofolate to 5,10-methenyltetrahydrofolate and then the hydrolysis of 5,10-methenyltetrahydrofolate to 10-formyltetrahydrofolate. In Geobacter metallireducens (strain ATCC 53774 / DSM 7210 / GS-15), this protein is Bifunctional protein FolD 1.